A 298-amino-acid chain; its full sequence is Glutamyl-Q tRNA(Asp) synthetase (298 aa).

L-glutamate is bound by residues 9-13 (RFAPS) and glutamate 45. The 'HIGH' region signature appears at 12–22 (PSPSGELHFGS). The Zn(2+) site is built by cysteine 101, cysteine 103, tyrosine 115, and cysteine 119. Residues tyrosine 172 and arginine 190 each contribute to the L-glutamate site. The short motif at 228–232 (KLSKQ) is the 'KMSKS' region element. Position 231 (lysine 231) interacts with ATP.

It belongs to the class-I aminoacyl-tRNA synthetase family. GluQ subfamily. The cofactor is Zn(2+).

Its function is as follows. Catalyzes the tRNA-independent activation of glutamate in presence of ATP and the subsequent transfer of glutamate onto a tRNA(Asp). Glutamate is transferred on the 2-amino-5-(4,5-dihydroxy-2-cyclopenten-1-yl) moiety of the queuosine in the wobble position of the QUC anticodon. This Citrobacter koseri (strain ATCC BAA-895 / CDC 4225-83 / SGSC4696) protein is Glutamyl-Q tRNA(Asp) synthetase.